Reading from the N-terminus, the 147-residue chain is Large ribosomal subunit protein uL13 (147 aa).

It belongs to the universal ribosomal protein uL13 family. In terms of assembly, part of the 50S ribosomal subunit.

In terms of biological role, this protein is one of the early assembly proteins of the 50S ribosomal subunit, although it is not seen to bind rRNA by itself. It is important during the early stages of 50S assembly. This chain is Large ribosomal subunit protein uL13, found in Renibacterium salmoninarum (strain ATCC 33209 / DSM 20767 / JCM 11484 / NBRC 15589 / NCIMB 2235).